The chain runs to 278 residues: NAD kinase (278 aa).

Residue D56 is the Proton acceptor of the active site. Residues 56-57 (DG), 132-133 (NE), R158, D160, and 171-176 (TAYNKS) contribute to the NAD(+) site.

It belongs to the NAD kinase family. A divalent metal cation is required as a cofactor.

Its subcellular location is the cytoplasm. It carries out the reaction NAD(+) + ATP = ADP + NADP(+) + H(+). Involved in the regulation of the intracellular balance of NAD and NADP, and is a key enzyme in the biosynthesis of NADP. Catalyzes specifically the phosphorylation on 2'-hydroxyl of the adenosine moiety of NAD to yield NADP. The polypeptide is NAD kinase (Streptococcus pyogenes serotype M1).